The following is a 1023-amino-acid chain: Sodium/potassium-transporting ATPase subunit alpha-1 (1023 aa).

Residues 1 to 5 constitute a propeptide that is removed on maturation; sequence MGKGV. Positions 1–11 are enriched in basic and acidic residues; it reads MGKGVGRDKYE. The disordered stretch occupies residues 1–39; the sequence is MGKGVGRDKYEPAAVSEQGDKKGKKGKKDRDMDELKKEV. At 6 to 87 the chain is on the cytoplasmic side; that stretch reads GRDKYEPAAV…NALTPPPTTP (82 aa). K9 carries the N6-acetyllysine modification. Y10 carries the post-translational modification Phosphotyrosine. S16 is subject to Phosphoserine. At K21 the chain carries N6-acetyllysine. Over residues 28–39 the composition is skewed to basic and acidic residues; the sequence is KDRDMDELKKEV. Residues S40 and S47 each carry the phosphoserine modification. The segment at 82–84 is phosphoinositide-3 kinase binding; that stretch reads PPP. A helical membrane pass occupies residues 88 to 108; it reads EWIKFCRQLFGGFSMLLWIGA. Residues 109 to 131 are Extracellular-facing; it reads ILCFLAYSIQAATEEEPQNDNLY. The chain crosses the membrane as a helical span at residues 132 to 152; it reads LGVVLSAVVIITGCFSYYQEA. Residues 153–288 are Cytoplasmic-facing; that stretch reads KSSKIMESFK…GGQTPIAAEI (136 aa). A disordered region spans residues 216–235; the sequence is SSLTGESEPQTRSPDFTNEN. A Phosphoserine modification is found at S228. Y260 is modified (phosphotyrosine). Residues 289 to 308 traverse the membrane as a helical segment; that stretch reads EHFIHIITGVAVFLGVSFFI. Topologically, residues 309–320 are extracellular; that stretch reads LSLILEYTWLEA. Residues 321–338 form a helical membrane-spanning segment; it reads VIFLIGIIVANVPEGLLA. Topologically, residues 339–772 are cytoplasmic; that stretch reads TVTVCLTLTA…EEGRLIFDNL (434 aa). The active-site 4-aspartylphosphate intermediate is the D376. A phosphoserine mark is found at S452 and S484. An ATP-binding site is contributed by K487. The residue at position 542 (Y542) is a Phosphotyrosine. The segment at 596–717 is mediates interaction with SCN7A; it reads RAAVPDAVGK…QGAIVAVTGD (122 aa). K661 is subject to N6-succinyllysine. Residues S668 and S675 each carry the phosphoserine modification. 2 residues coordinate Mg(2+): D717 and D721. The chain crosses the membrane as a helical span at residues 773 to 792; sequence KKSIAYTLTSNIPEITPFLI. The Extracellular portion of the chain corresponds to 793-802; that stretch reads FIIANIPLPL. A helical membrane pass occupies residues 803–823; it reads GTVTILCIDLGTDMVPAISLA. Over 824-843 the chain is Cytoplasmic; sequence YEQAESDIMKRQPRNPKTDK. A helical transmembrane segment spans residues 844–866; that stretch reads LVNERLISMAYGQIGMIQALGGF. The Extracellular segment spans residues 867–918; sequence FTYFVILAENGFLPIHLLGLRVDWDDRWINDVEDSYGQQWTYEQRKIVEFTC. A helical membrane pass occupies residues 919–938; the sequence is HTAFFVSIVVVQWADLVICK. At 939 to 951 the chain is on the cytoplasmic side; the sequence is TRRNSVFQQGMKN. S943 carries the post-translational modification Phosphoserine; by PKA. A helical membrane pass occupies residues 952–970; it reads KILIFGLFEETALAAFLSY. Over 971–985 the chain is Extracellular; the sequence is CPGMGVALRMYPLKP. The chain crosses the membrane as a helical span at residues 986-1006; sequence TWWFCAFPYSLLIFVYDEVRK. Topologically, residues 1007–1023 are cytoplasmic; the sequence is LIIRRRPGGWVEKETYY.

It belongs to the cation transport ATPase (P-type) (TC 3.A.3) family. Type IIC subfamily. As to quaternary structure, the sodium/potassium-transporting ATPase is composed of a catalytic alpha subunit, an auxiliary non-catalytic beta subunit and an additional regulatory subunit. Interacts with regulatory subunit FXYD1. Interacts with regulatory subunit FXYD3. Interacts with SIK1. Binds the HLA class II histocompatibility antigen DR1. Interacts with SLC35G1 and STIM1. Interacts with CLN3; this interaction regulates the sodium/potassium-transporting ATPase complex localization at the plasma membrane. Interacts with SCN7A; activates ATP1A1 P-type sodium:potassium-exchanging transporter activity which indirectly signals to nearby neurons to regulate sodium homeostasis. Phosphorylation on Tyr-10 modulates pumping activity. Phosphorylation of Ser-943 by PKA modulates the response of ATP1A1 to PKC. Dephosphorylation by protein phosphatase 2A (PP2A) following increases in intracellular sodium, leading to increase catalytic activity.

Its subcellular location is the cell membrane. It is found in the basolateral cell membrane. The protein localises to the sarcolemma. It localises to the cell projection. The protein resides in the axon. Its subcellular location is the melanosome. The enzyme catalyses K(+)(out) + Na(+)(in) + ATP + H2O = K(+)(in) + Na(+)(out) + ADP + phosphate + H(+). In terms of biological role, this is the catalytic component of the active enzyme, which catalyzes the hydrolysis of ATP coupled with the exchange of sodium and potassium ions across the plasma membrane. This action creates the electrochemical gradient of sodium and potassium ions, providing the energy for active transport of various nutrients. Could also be part of an osmosensory signaling pathway that senses body-fluid sodium levels and controls salt intake behavior as well as voluntary water intake to regulate sodium homeostasis. This chain is Sodium/potassium-transporting ATPase subunit alpha-1 (ATP1A1), found in Homo sapiens (Human).